Consider the following 193-residue polypeptide: Ion-translocating oxidoreductase complex subunit A (193 aa).

The next 6 helical transmembrane spans lie at 5–25 (LLLFVGTVLVNNFVLVKFLGL), 39–59 (IGMGLATTFVLTLASVCAWMV), 62–82 (FILLPLGLIYLRTLAFILVIA), 102–122 (LLGIFLPLITTNCAVLGVALL), 134–154 (AVYGFSAAAGFSLVMVLFAAI), and 171–191 (SIALITAGLMSLAFMGFTGLV).

Belongs to the NqrDE/RnfAE family. The complex is composed of six subunits: RnfA, RnfB, RnfC, RnfD, RnfE and RnfG.

The protein resides in the cell inner membrane. In terms of biological role, part of a membrane-bound complex that couples electron transfer with translocation of ions across the membrane. The protein is Ion-translocating oxidoreductase complex subunit A of Yersinia pestis bv. Antiqua (strain Nepal516).